We begin with the raw amino-acid sequence, 461 residues long: tRNA modification GTPase MnmE (461 aa).

Residues K32, E89, and K128 each coordinate (6S)-5-formyl-5,6,7,8-tetrahydrofolate. Residues 224–387 enclose the TrmE-type G domain; the sequence is GHALSIVGKP…LGQKISAFFP (164 aa). N234 provides a ligand contact to K(+). GTP contacts are provided by residues 234-239, 253-259, and 278-281; these read NAGKSS, SDIKGTT, and DTAG. S238 serves as a coordination point for Mg(2+). S253, I255, and T258 together coordinate K(+). T259 provides a ligand contact to Mg(2+). K461 lines the (6S)-5-formyl-5,6,7,8-tetrahydrofolate pocket.

Belongs to the TRAFAC class TrmE-Era-EngA-EngB-Septin-like GTPase superfamily. TrmE GTPase family. As to quaternary structure, homodimer. Heterotetramer of two MnmE and two MnmG subunits. The cofactor is K(+).

It localises to the cytoplasm. In terms of biological role, exhibits a very high intrinsic GTPase hydrolysis rate. Involved in the addition of a carboxymethylaminomethyl (cmnm) group at the wobble position (U34) of certain tRNAs, forming tRNA-cmnm(5)s(2)U34. In Helicobacter pylori (strain HPAG1), this protein is tRNA modification GTPase MnmE.